The following is a 321-amino-acid chain: L-carnitine dehydrogenase (321 aa).

NAD(+) is bound at residue 7–12 (GTGVIG).

It belongs to the 3-hydroxyacyl-CoA dehydrogenase family. L-carnitine dehydrogenase subfamily. As to quaternary structure, homodimer.

The protein resides in the cytoplasm. It catalyses the reaction carnitine + NAD(+) = 3-dehydrocarnitine + NADH + H(+). It participates in amine and polyamine metabolism; carnitine metabolism. Functionally, catalyzes the NAD(+)-dependent oxidation of L-carnitine to 3-dehydrocarnitine. The sequence is that of L-carnitine dehydrogenase from Staphylococcus epidermidis (strain ATCC 12228 / FDA PCI 1200).